A 309-amino-acid polypeptide reads, in one-letter code: Foldase protein PrsA (309 aa).

The signal sequence occupies residues 1–20; that stretch reads MKKKIVAGAVTLLSVAVLAA. The N-palmitoyl cysteine moiety is linked to residue Cys-21. A lipid anchor (S-diacylglycerol cysteine) is attached at Cys-21. The region spanning 144–241 is the PpiC domain; it reads TPEVTAQIIK…ASYYIVKLVS (98 aa).

The protein belongs to the PrsA family.

It is found in the cell membrane. The catalysed reaction is [protein]-peptidylproline (omega=180) = [protein]-peptidylproline (omega=0). In terms of biological role, plays a major role in protein secretion by helping the post-translocational extracellular folding of several secreted proteins. This chain is Foldase protein PrsA, found in Streptococcus gordonii (strain Challis / ATCC 35105 / BCRC 15272 / CH1 / DL1 / V288).